We begin with the raw amino-acid sequence, 73 residues long: uncharacterized protein (73 aa).

In terms of domain architecture, HTH deoR-type spans 8 to 63 (MLTRIKSVYMFIQEKGLVTTQELVDEFGITPRTIQRDLNVLAYNDLVHSPSRGKWE). Residues 25–44 (VTTQELVDEFGITPRTIQRD) constitute a DNA-binding region (H-T-H motif).

This is an uncharacterized protein from Bacillus subtilis (strain 168).